A 190-amino-acid chain; its full sequence is Glycine cleavage system transcriptional repressor (190 aa).

ACT domains are found at residues 10 to 91 (VITA…PRPP) and 97 to 176 (WVQV…GSIN).

Its subcellular location is the cytoplasm. Negative transcriptional regulator of the glycine cleavage system operon (GCV). Does not autoregulate its own expression. It is not yet known how GcvR acts as a repressor. It does not seem to bind DNA. It could interact with GcvA and suppress its activatory activity. This chain is Glycine cleavage system transcriptional repressor (gcvR), found in Escherichia coli (strain K12).